The chain runs to 198 residues: Probable molybdenum cofactor guanylyltransferase (198 aa).

GTP contacts are provided by residues L11–G13, K23, D71, and D102. D102 provides a ligand contact to Mg(2+).

It belongs to the MobA family. It depends on Mg(2+) as a cofactor.

The protein resides in the cytoplasm. The catalysed reaction is Mo-molybdopterin + GTP + H(+) = Mo-molybdopterin guanine dinucleotide + diphosphate. Its function is as follows. Transfers a GMP moiety from GTP to Mo-molybdopterin (Mo-MPT) cofactor (Moco or molybdenum cofactor) to form Mo-molybdopterin guanine dinucleotide (Mo-MGD) cofactor. This Halalkalibacterium halodurans (strain ATCC BAA-125 / DSM 18197 / FERM 7344 / JCM 9153 / C-125) (Bacillus halodurans) protein is Probable molybdenum cofactor guanylyltransferase.